A 314-amino-acid chain; its full sequence is MKETVGNKIVLIGAGDVGVAYAYALINQGMADHLAIIDIDEKKLEGNVMDLNHGVVWADSRTRVTKGTYADCEDAAMVVICAGAAQKPGETRLQLVDKNVKIMKSIVGDVMASGFDGIFLVASNPVDILTYAVWKFSGLEWNRVIGSGTVLDSARFRYMLGELYEVAPSSVHAYIIGEHGDTELPVLSSATIAGVSLSRMLDKDPELEGRLEKIFEDTRDAAYHIIDAKGSTSYGIGMGLARITRAILQNQDVAVPVSALLHGEYGEEDIYIGTPAVVNRRGIRRVVELEITDHEMERFKHSANTLREIQKQFF.

NAD(+) is bound by residues Val17, Asp38, Lys43, Tyr69, and 83-84 (GA). Gln86 and Arg92 together coordinate substrate. NAD(+)-binding positions include Ser105, 122–124 (ASN), and Ser147. 124 to 127 (NPVD) lines the substrate pocket. 152–155 (DSAR) serves as a coordination point for substrate. Arg157 and His172 together coordinate beta-D-fructose 1,6-bisphosphate. Catalysis depends on His179, which acts as the Proton acceptor. Phosphotyrosine is present on Tyr223. Thr232 lines the substrate pocket.

Belongs to the LDH/MDH superfamily. LDH family. Homotetramer.

Its subcellular location is the cytoplasm. It carries out the reaction (S)-lactate + NAD(+) = pyruvate + NADH + H(+). The protein operates within fermentation; pyruvate fermentation to lactate; (S)-lactate from pyruvate: step 1/1. With respect to regulation, allosterically activated by fructose 1,6-bisphosphate (FBP). Catalyzes the conversion of lactate to pyruvate. The sequence is that of L-lactate dehydrogenase from Corynebacterium glutamicum (strain R).